Reading from the N-terminus, the 1196-residue chain is DNA-directed RNA polymerase subunit beta (1196 aa).

The segment covering 1152–1165 (EEEIEMRDLEDEED) has biased composition (acidic residues). Residues 1152 to 1196 (EEEIEMRDLEDEEDAKQADGLALSGDEAPEETASPDVERDAVTKE) form a disordered region. The span at 1187 to 1196 (DVERDAVTKE) shows a compositional bias: basic and acidic residues.

Belongs to the RNA polymerase beta chain family. As to quaternary structure, the RNAP catalytic core consists of 2 alpha, 1 beta, 1 beta' and 1 omega subunit. When a sigma factor is associated with the core the holoenzyme is formed, which can initiate transcription.

It carries out the reaction RNA(n) + a ribonucleoside 5'-triphosphate = RNA(n+1) + diphosphate. DNA-dependent RNA polymerase catalyzes the transcription of DNA into RNA using the four ribonucleoside triphosphates as substrates. This Bacillus velezensis (strain DSM 23117 / BGSC 10A6 / LMG 26770 / FZB42) (Bacillus amyloliquefaciens subsp. plantarum) protein is DNA-directed RNA polymerase subunit beta.